The chain runs to 207 residues: Large ribosomal subunit protein uL4 (207 aa).

The disordered stretch occupies residues 56–76 (EVRGGGRKPWRQKGTGRARAG). Over residues 60-71 (GGRKPWRQKGTG) the composition is skewed to basic residues.

Belongs to the universal ribosomal protein uL4 family. Part of the 50S ribosomal subunit.

Its function is as follows. One of the primary rRNA binding proteins, this protein initially binds near the 5'-end of the 23S rRNA. It is important during the early stages of 50S assembly. It makes multiple contacts with different domains of the 23S rRNA in the assembled 50S subunit and ribosome. In terms of biological role, forms part of the polypeptide exit tunnel. This is Large ribosomal subunit protein uL4 from Desulfitobacterium hafniense (strain DSM 10664 / DCB-2).